We begin with the raw amino-acid sequence, 354 residues long: 3-dehydroquinate synthase (354 aa).

Residues Asp-39, Tyr-45, 68 to 71, 100 to 104, 124 to 125, Lys-136, Lys-145, and 163 to 166 contribute to the NAD(+) site; these read EKTK, GATGD, TT, and FLKT. Positions 178, 242, and 256 each coordinate Zn(2+).

Belongs to the sugar phosphate cyclases superfamily. Dehydroquinate synthase family. It depends on NAD(+) as a cofactor. The cofactor is Co(2+). Requires Zn(2+) as cofactor.

It localises to the cytoplasm. The catalysed reaction is 7-phospho-2-dehydro-3-deoxy-D-arabino-heptonate = 3-dehydroquinate + phosphate. It participates in metabolic intermediate biosynthesis; chorismate biosynthesis; chorismate from D-erythrose 4-phosphate and phosphoenolpyruvate: step 2/7. Catalyzes the conversion of 3-deoxy-D-arabino-heptulosonate 7-phosphate (DAHP) to dehydroquinate (DHQ). The sequence is that of 3-dehydroquinate synthase from Staphylococcus aureus (strain MRSA252).